A 412-amino-acid chain; its full sequence is uncharacterized protein (412 aa).

Histidine 49 provides a ligand contact to Zn(2+). Glutamate 52 (proton acceptor) is an active-site residue. Residues histidine 53 and glutamate 129 each coordinate Zn(2+).

This sequence belongs to the peptidase M16 family. Zn(2+) serves as cofactor.

This is an uncharacterized protein from Rickettsia bellii (strain RML369-C).